A 165-amino-acid polypeptide reads, in one-letter code: Crossover junction endodeoxyribonuclease RuvC (165 aa).

Residues Asp-7, Glu-67, and Asp-140 contribute to the active site. Residues Asp-7, Glu-67, and Asp-140 each coordinate Mg(2+).

This sequence belongs to the RuvC family. In terms of assembly, homodimer which binds Holliday junction (HJ) DNA. The HJ becomes 2-fold symmetrical on binding to RuvC with unstacked arms; it has a different conformation from HJ DNA in complex with RuvA. In the full resolvosome a probable DNA-RuvA(4)-RuvB(12)-RuvC(2) complex forms which resolves the HJ. Mg(2+) is required as a cofactor.

It localises to the cytoplasm. The catalysed reaction is Endonucleolytic cleavage at a junction such as a reciprocal single-stranded crossover between two homologous DNA duplexes (Holliday junction).. Functionally, the RuvA-RuvB-RuvC complex processes Holliday junction (HJ) DNA during genetic recombination and DNA repair. Endonuclease that resolves HJ intermediates. Cleaves cruciform DNA by making single-stranded nicks across the HJ at symmetrical positions within the homologous arms, yielding a 5'-phosphate and a 3'-hydroxyl group; requires a central core of homology in the junction. The consensus cleavage sequence is 5'-(A/T)TT(C/G)-3'. Cleavage occurs on the 3'-side of the TT dinucleotide at the point of strand exchange. HJ branch migration catalyzed by RuvA-RuvB allows RuvC to scan DNA until it finds its consensus sequence, where it cleaves and resolves the cruciform DNA. The polypeptide is Crossover junction endodeoxyribonuclease RuvC (Desulfitobacterium hafniense (strain DSM 10664 / DCB-2)).